The chain runs to 495 residues: Aspartyl/glutamyl-tRNA(Asn/Gln) amidotransferase subunit B (495 aa).

Belongs to the GatB/GatE family. GatB subfamily. In terms of assembly, heterotrimer of A, B and C subunits.

The catalysed reaction is L-glutamyl-tRNA(Gln) + L-glutamine + ATP + H2O = L-glutaminyl-tRNA(Gln) + L-glutamate + ADP + phosphate + H(+). It catalyses the reaction L-aspartyl-tRNA(Asn) + L-glutamine + ATP + H2O = L-asparaginyl-tRNA(Asn) + L-glutamate + ADP + phosphate + 2 H(+). In terms of biological role, allows the formation of correctly charged Asn-tRNA(Asn) or Gln-tRNA(Gln) through the transamidation of misacylated Asp-tRNA(Asn) or Glu-tRNA(Gln) in organisms which lack either or both of asparaginyl-tRNA or glutaminyl-tRNA synthetases. The reaction takes place in the presence of glutamine and ATP through an activated phospho-Asp-tRNA(Asn) or phospho-Glu-tRNA(Gln). This Prochlorococcus marinus (strain MIT 9313) protein is Aspartyl/glutamyl-tRNA(Asn/Gln) amidotransferase subunit B.